The primary structure comprises 301 residues: Aspartate carbamoyltransferase catalytic subunit (301 aa).

Carbamoyl phosphate is bound by residues Arg-54 and Thr-55. L-aspartate is bound at residue Lys-82. The carbamoyl phosphate site is built by Arg-104, His-132, and Gln-135. Arg-165 and Arg-217 together coordinate L-aspartate. Carbamoyl phosphate contacts are provided by Gly-257 and Pro-258.

It belongs to the aspartate/ornithine carbamoyltransferase superfamily. ATCase family. Heterododecamer (2C3:3R2) of six catalytic PyrB chains organized as two trimers (C3), and six regulatory PyrI chains organized as three dimers (R2).

It carries out the reaction carbamoyl phosphate + L-aspartate = N-carbamoyl-L-aspartate + phosphate + H(+). The protein operates within pyrimidine metabolism; UMP biosynthesis via de novo pathway; (S)-dihydroorotate from bicarbonate: step 2/3. Functionally, catalyzes the condensation of carbamoyl phosphate and aspartate to form carbamoyl aspartate and inorganic phosphate, the committed step in the de novo pyrimidine nucleotide biosynthesis pathway. This is Aspartate carbamoyltransferase catalytic subunit from Thermus aquaticus.